A 483-amino-acid chain; its full sequence is Coagulation factor X isoform 1 (483 aa).

The first 20 residues, 1–20 (MAPQLLLCLILTFLWSLPEA), serve as a signal peptide directing secretion. Positions 21–40 (ESNVFLKSKVANRFLQRTKR) are excised as a propeptide. The Gla domain maps to 41 to 86 (ANSLFEEFKSGNIERECIEERCSKEEAREAFEDDEKTETFWNVYVD). 11 positions are modified to 4-carboxyglutamate: Glu46, Glu47, Glu54, Glu56, Glu59, Glu60, Glu65, Glu66, Glu69, Glu72, and Glu75. Cys57 and Cys62 are oxidised to a cystine. An EGF-like 1; calcium-binding domain is found at 86–122 (DGDQCSSNPCHYGGTCKDGIGSYTCTCLSGYEGKNCE). Disulfide bonds link Cys90/Cys101, Cys95/Cys110, Cys112/Cys121, Cys129/Cys140, Cys136/Cys149, Cys151/Cys164, Cys172/Cys345, Cys245/Cys250, Cys265/Cys281, Cys393/Cys407, and Cys418/Cys446. Ser92 is a glycosylation site (O-linked (Hex...) serine). Asp103 bears the (3R)-3-hydroxyaspartate mark. One can recognise an EGF-like 2 domain in the interval 125–165 (LYKSCRVDNGDCWHFCKPVQNGIQCSCAESYLLGEDGHSCV). Positions 183–238 (EANLPDFQTDFSDDYDEIDENNFVETPTNFSGLVLTVQSQNATLLKKSDNPSPDIR) are cleaved as a propeptide — activation peptide. Residues 239–470 (VVNGTDCKLG…FILWIKRIIR (232 aa)) enclose the Peptidase S1 domain. His280 acts as the Charge relay system in catalysis. N-linked (GlcNAc...) asparagine glycosylation occurs at Asn283. The active-site Charge relay system is the Asp325. Catalysis depends on Ser422, which acts as the Charge relay system.

The protein belongs to the peptidase S1 family. Heterodimer of a light chain and a heavy chain; disulfide-linked. In terms of processing, gamma-carboxyglutamate residues are formed by vitamin K dependent carboxylation. These residues are essential for the binding of calcium. The activation peptide is cleaved by factor IXa (in the intrinsic pathway), or by factor VIIa (in the extrinsic pathway). Post-translationally, the iron and 2-oxoglutarate dependent 3-hydroxylation of aspartate and asparagine is (R) stereospecific within EGF domains. In terms of tissue distribution, plasma; synthesized in the liver.

Its subcellular location is the secreted. The enzyme catalyses Selective cleavage of Arg-|-Thr and then Arg-|-Ile bonds in prothrombin to form thrombin.. Its function is as follows. Factor Xa is a vitamin K-dependent glycoprotein that converts prothrombin to thrombin in the presence of factor Va, calcium and phospholipid during blood clotting. In Pseudonaja textilis (Eastern brown snake), this protein is Coagulation factor X isoform 1 (F10).